Reading from the N-terminus, the 1460-residue chain is Venom prothrombin activator omicarin-C non-catalytic subunit (1460 aa).

Residues 1–30 (MGRYSVSPVPKCLLLMFLGWSGLKYYQVNA) form the signal peptide. 4 consecutive Plastocyanin-like domains span residues 32–196 (QLRE…LLIC), 206–330 (AQKF…LNIK), 351–529 (MNWE…LLVC), and 539–685 (VQNK…FLDA). 2 F5/8 type A domains span residues 32 to 330 (QLRE…LNIK) and 350 to 685 (IMNW…FLDA). Ca(2+) is bound by residues lysine 124, glutamate 139, aspartate 142, and aspartate 143. Residue asparagine 156 is glycosylated (N-linked (GlcNAc...) asparagine). Cysteine 170 and cysteine 196 form a disulfide bridge. N-linked (GlcNAc...) asparagine glycans are attached at residues asparagine 242, asparagine 300, asparagine 385, asparagine 406, and asparagine 471. An intrachain disulfide couples cysteine 251 to cysteine 332. A disulfide bridge connects residues cysteine 503 and cysteine 529. Asparagine 557 is a glycosylation site (N-linked (GlcNAc...) asparagine). 4 disulfides stabilise this stretch: cysteine 672–cysteine 1031, cysteine 965–cysteine 991, cysteine 1147–cysteine 1298, and cysteine 1303–cysteine 1457. The segment at 693–817 (GNEEEEEDDG…SDDIAGRYLR (125 aa)) is b. The tract at residues 740 to 760 (LLDDEDNPEQSRSEQTEDDEE) is disordered. Positions 772-817 (SFKGSVAEEELKHTALALEEDAHASDPRIDSNSARNSDDIAGRYLR) are cleaved as a propeptide — activation peptide (connecting region). Plastocyanin-like domains lie at 823 to 991 (NKRR…ILIC) and 1000 to 1143 (NRTI…FTVI). An F5/8 type A 3 domain is found at 823-1143 (NKRRYYIAAE…RGMQALFTVI (321 aa)). Ca(2+) contacts are provided by lysine 919, phenylalanine 934, aspartate 937, and aspartate 938. A glycan (N-linked (GlcNAc...) asparagine) is linked at asparagine 943. N-linked (GlcNAc...) asparagine glycans are attached at residues asparagine 1000, asparagine 1180, and asparagine 1397. 2 F5/8 type C domains span residues 1147–1298 (CKLP…LLGC) and 1303–1457 (CSVP…LFGC).

It belongs to the multicopper oxidase family. Heterodimer of a light and a heavy chains; non-disulfide-linked. The interaction between the two chains is calcium-dependent. Found in its active form associated with omicarin-C catalytic subunit (AC Q58L95). In terms of processing, in physiological conditions, blood coagulation factor V and factor Va are inactivated by activated protein C (APC) through proteolytic degradation of the heavy chain. However, omicarin-C non-catalytic subunit (factor V-like protein) retains its full activity even at high concentration of APC. This has two explanations: this protein has only one of the three cleavage sites present in factor V that are targeted by the APC for inactivation, and the binding with the catalytic subunit protect the cleavage site from inactivation. In terms of tissue distribution, expressed by the venom gland.

It localises to the secreted. Its function is as follows. Snake prothrombin activator that attacks the hemostatic system of prey. This non-catalytic subunit is functionally similar to blood coagulation factor V. It serves as a critical cofactor for the prothrombinase activity of the catalytic subunit, which is similar to the blood coagulation factor X. The complex converts prothrombin to thrombin by sequential cleavage at two positions, Arg-320 followed by Arg-271. Cleavage at Arg-320 produces an active intermediate known as meizothrombin. Meizothrombin is the 'second' substrate for prothrombinase, and it docks in an altered manner to present the second cleavage site (271). Cleavage at Arg-271 releases active thrombin from its pro-fragment. This order of events is reversed if the protease component of prothrombinase is used on its own, suggesting that the 271 site is inherently more accessible to proteolysis. The protein is Venom prothrombin activator omicarin-C non-catalytic subunit of Oxyuranus microlepidotus (Inland taipan).